A 369-amino-acid polypeptide reads, in one-letter code: Dual-specificity RNA methyltransferase RlmN (369 aa).

The Proton acceptor role is filled by Glu-94. The region spanning 113-346 (ESEKWTMCLS…CTIRESRGID (234 aa)) is the Radical SAM core domain. A disulfide bridge connects residues Cys-120 and Cys-351. [4Fe-4S] cluster-binding residues include Cys-127, Cys-131, and Cys-134. Residues 177 to 178 (GE), Ser-209, 232 to 234 (SLH), and Asn-308 each bind S-adenosyl-L-methionine. Catalysis depends on Cys-351, which acts as the S-methylcysteine intermediate.

This sequence belongs to the radical SAM superfamily. RlmN family. It depends on [4Fe-4S] cluster as a cofactor.

Its subcellular location is the cytoplasm. The enzyme catalyses adenosine(2503) in 23S rRNA + 2 reduced [2Fe-2S]-[ferredoxin] + 2 S-adenosyl-L-methionine = 2-methyladenosine(2503) in 23S rRNA + 5'-deoxyadenosine + L-methionine + 2 oxidized [2Fe-2S]-[ferredoxin] + S-adenosyl-L-homocysteine. It catalyses the reaction adenosine(37) in tRNA + 2 reduced [2Fe-2S]-[ferredoxin] + 2 S-adenosyl-L-methionine = 2-methyladenosine(37) in tRNA + 5'-deoxyadenosine + L-methionine + 2 oxidized [2Fe-2S]-[ferredoxin] + S-adenosyl-L-homocysteine. Its function is as follows. Specifically methylates position 2 of adenine 2503 in 23S rRNA and position 2 of adenine 37 in tRNAs. m2A2503 modification seems to play a crucial role in the proofreading step occurring at the peptidyl transferase center and thus would serve to optimize ribosomal fidelity. The sequence is that of Dual-specificity RNA methyltransferase RlmN from Helicobacter hepaticus (strain ATCC 51449 / 3B1).